Here is a 489-residue protein sequence, read N- to C-terminus: Adenosylhomocysteinase (489 aa).

T68, D151, and E213 together coordinate substrate. 214-216 (TTT) contributes to the NAD(+) binding site. Substrate-binding residues include K243 and D247. Residues N248, 277–282 (GYGDVG), E300, N335, 356–358 (IGH), and N403 each bind NAD(+).

It belongs to the adenosylhomocysteinase family. NAD(+) serves as cofactor.

Its subcellular location is the cytoplasm. It carries out the reaction S-adenosyl-L-homocysteine + H2O = L-homocysteine + adenosine. It functions in the pathway amino-acid biosynthesis; L-homocysteine biosynthesis; L-homocysteine from S-adenosyl-L-homocysteine: step 1/1. Functionally, may play a key role in the regulation of the intracellular concentration of adenosylhomocysteine. The polypeptide is Adenosylhomocysteinase (Mycobacterium sp. (strain KMS)).